The primary structure comprises 212 residues: Pyridoxine/pyridoxamine 5'-phosphate oxidase (212 aa).

Substrate-binding positions include 8-11 (RKNY) and Lys66. FMN contacts are provided by residues 61–66 (RIVLIK), 76–77 (FT), Arg82, Lys83, and Gln105. Residues Tyr123, Arg127, and Ser131 each contribute to the substrate site. FMN-binding positions include 140-141 (QS) and Trp184. 190-192 (RLH) serves as a coordination point for substrate. Position 194 (Arg194) interacts with FMN.

Belongs to the pyridoxamine 5'-phosphate oxidase family. Homodimer. FMN is required as a cofactor.

It carries out the reaction pyridoxamine 5'-phosphate + O2 + H2O = pyridoxal 5'-phosphate + H2O2 + NH4(+). It catalyses the reaction pyridoxine 5'-phosphate + O2 = pyridoxal 5'-phosphate + H2O2. The protein operates within cofactor metabolism; pyridoxal 5'-phosphate salvage; pyridoxal 5'-phosphate from pyridoxamine 5'-phosphate: step 1/1. Its pathway is cofactor metabolism; pyridoxal 5'-phosphate salvage; pyridoxal 5'-phosphate from pyridoxine 5'-phosphate: step 1/1. Its function is as follows. Catalyzes the oxidation of either pyridoxine 5'-phosphate (PNP) or pyridoxamine 5'-phosphate (PMP) into pyridoxal 5'-phosphate (PLP). This Paraburkholderia phymatum (strain DSM 17167 / CIP 108236 / LMG 21445 / STM815) (Burkholderia phymatum) protein is Pyridoxine/pyridoxamine 5'-phosphate oxidase.